Here is a 294-residue protein sequence, read N- to C-terminus: Acetyl-coenzyme A carboxylase carboxyl transferase subunit beta (294 aa).

The CoA carboxyltransferase N-terminal domain maps to 30-294 (IMTKCPECKK…PGVGGEVDGE (265 aa)). Zn(2+) is bound by residues C34, C37, C53, and C56. The C4-type zinc finger occupies 34 to 56 (CPECKKIMYTKELQKNLMVCNYC).

Belongs to the AccD/PCCB family. As to quaternary structure, acetyl-CoA carboxylase is a heterohexamer composed of biotin carboxyl carrier protein (AccB), biotin carboxylase (AccC) and two subunits each of ACCase subunit alpha (AccA) and ACCase subunit beta (AccD). Zn(2+) is required as a cofactor.

It localises to the cytoplasm. It catalyses the reaction N(6)-carboxybiotinyl-L-lysyl-[protein] + acetyl-CoA = N(6)-biotinyl-L-lysyl-[protein] + malonyl-CoA. Its pathway is lipid metabolism; malonyl-CoA biosynthesis; malonyl-CoA from acetyl-CoA: step 1/1. Component of the acetyl coenzyme A carboxylase (ACC) complex. Biotin carboxylase (BC) catalyzes the carboxylation of biotin on its carrier protein (BCCP) and then the CO(2) group is transferred by the transcarboxylase to acetyl-CoA to form malonyl-CoA. This Listeria monocytogenes serovar 1/2a (strain ATCC BAA-679 / EGD-e) protein is Acetyl-coenzyme A carboxylase carboxyl transferase subunit beta.